The sequence spans 113 residues: Class I hydrophobin POH3 (113 aa).

Positions 1-21 are cleaved as a signal peptide; sequence MFSRVIFCTFLILPLLAAATA. 4 disulfide bridges follow: cysteine 32/cysteine 92, cysteine 39/cysteine 86, cysteine 40/cysteine 73, and cysteine 93/cysteine 106. Asparagine 110 is a glycosylation site (N-linked (GlcNAc...) asparagine).

The protein belongs to the fungal hydrophobin family. As to quaternary structure, self-assembles to form functional amyloid fibrils called rodlets. Self-assembly into fibrillar rodlets occurs spontaneously at hydrophobic:hydrophilic interfaces and the rodlets further associate laterally to form amphipathic monolayers. In terms of tissue distribution, expressionn is switched off in the fruiting bodies but abundantly expressed in the vegetative mycelium of both monokaryon and dikaryon.

It localises to the secreted. It is found in the cell wall. Its function is as follows. Aerial growth, conidiation, and dispersal of filamentous fungi in the environment rely upon a capability of their secreting small amphipathic proteins called hydrophobins (HPBs) with low sequence identity. Class I can self-assemble into an outermost layer of rodlet bundles on aerial cell surfaces, conferring cellular hydrophobicity that supports fungal growth, development and dispersal; whereas Class II form highly ordered films at water-air interfaces through intermolecular interactions but contribute nothing to the rodlet structure. POH3 is a class I hydrophobin that causes a large drop in the water-surface tension, enabling hyphae to breach the interface and grow into the air, in both the primary and the secondary mycelium. In the latter mycelium POH3 maight also play a role in the emergence of fruiting bodies. Secreted POH3 could also play a role in facilitating lignin degradation. The protein is Class I hydrophobin POH3 of Pleurotus ostreatus (Oyster mushroom).